The sequence spans 314 residues: tRNA pseudouridine synthase B (314 aa).

A substrate-binding site is contributed by histidine 43. The Nucleophile role is filled by aspartate 48. Substrate is bound by residues tyrosine 76, tyrosine 179, and leucine 200.

It belongs to the pseudouridine synthase TruB family. Type 1 subfamily.

The enzyme catalyses uridine(55) in tRNA = pseudouridine(55) in tRNA. Its function is as follows. Responsible for synthesis of pseudouridine from uracil-55 in the psi GC loop of transfer RNAs. The chain is tRNA pseudouridine synthase B from Salmonella choleraesuis (strain SC-B67).